The primary structure comprises 257 residues: MSSEIEADLSEKRLVREAGVAARVAQAIEGPLAGLGFRLVRVRMSNVNGCTVQIMAERPDGTFTIDDCEAVSRAISPILDVDDPVGGAYNLEVSSPGIDRPLVRVSDFARWAGYEAKVELSPPLDGRKRFRGILGAPDPTGTTVPIDLPDVKEGLPSRIDLPLKDLAEAHLVLTDELIRESLRRGGPPAADEADEAEEAEDEEVAAESASSPARAPFQPKGPRKASPAAKPQKQARTGPKKPVVTKASRLKDRDSLH.

Residues L182–H257 are disordered. A compositionally biased stretch (acidic residues) spans D191–A205. The segment covering K224–R236 has biased composition (low complexity).

Belongs to the RimP family.

It localises to the cytoplasm. Its function is as follows. Required for maturation of 30S ribosomal subunits. This Methylobacterium radiotolerans (strain ATCC 27329 / DSM 1819 / JCM 2831 / NBRC 15690 / NCIMB 10815 / 0-1) protein is Ribosome maturation factor RimP.